The sequence spans 238 residues: Aspirochlorine biosynthesis protein N (238 aa).

This sequence belongs to the asaB hydroxylase/desaturase family.

It participates in mycotoxin biosynthesis. Part of the gene cluster that mediates the biosynthesis of aspirochlorine (or antibiotic A30641), an unusual halogenated spiro compound with distinctive antifungal properties due to selective inhibition of protein biosynthesis, and which is also active against bacteria, viruses, and murine tumor cells. The non-ribosomal peptide synthetase (NRPS) aclP is responsible the formation of the diketopiperazine (DKP) core from the condensation of 2 phenylalanine residues. One Phe residue is tailored into chlorotyrosine by hydroxylation and chlorination, whereas the second Phe undergoes an unprecedented C-C bond cleavage to be converted into glycine. After formation of the DKP, sulfur is incorporated into the DKP by conjugation with glutathione by aclG, followed by its stepwise degradation to the thiol by aclI, aclJ and aclK, and the dithiol oxidation by aclT. In addition, oxygenases (aclB, aclC, aclL and aclO) and O-methyltransferases (aclM and aclU) act as tailoring enzymes to produce the intermediate dechloroaspirochlorine. Ultimately, chlorination of dechloroaspirochlorine by the halogenase aclH is the last step in the aspirochlorine pathway. This Aspergillus oryzae (strain ATCC 42149 / RIB 40) (Yellow koji mold) protein is Aspirochlorine biosynthesis protein N.